A 55-amino-acid chain; its full sequence is Protein CADMIUM TOLERANCE 1 (55 aa).

Residues Gly24–Tyr40 traverse the membrane as a helical segment.

It belongs to the CYSTM1 family.

The protein resides in the cell membrane. It is found in the secreted. The protein localises to the cell wall. Confers resistance to heavy metal ions (e.g. cadmium (CdCl(2)) and copper (CuCl(2))) by chelating them at the plasma membrane of root cells, thus stopping their entry and reducing their accumulation. The sequence is that of Protein CADMIUM TOLERANCE 1 from Echinochloa crus-galli subsp. caudata (Cockspur).